Reading from the N-terminus, the 465-residue chain is Asparagine--tRNA ligase (465 aa).

Belongs to the class-II aminoacyl-tRNA synthetase family. As to quaternary structure, homodimer.

The protein resides in the cytoplasm. The catalysed reaction is tRNA(Asn) + L-asparagine + ATP = L-asparaginyl-tRNA(Asn) + AMP + diphosphate + H(+). The chain is Asparagine--tRNA ligase from Hahella chejuensis (strain KCTC 2396).